Reading from the N-terminus, the 419-residue chain is CinA-like protein (419 aa).

It belongs to the CinA family.

In Synechococcus sp. (strain CC9902), this protein is CinA-like protein.